A 335-amino-acid polypeptide reads, in one-letter code: Autophagy-related protein 21 (335 aa).

WD repeat units follow at residues cysteine 165–glutamate 205 and tyrosine 210–asparagine 249.

This sequence belongs to the WD repeat PROPPIN family.

Its subcellular location is the cytoplasm. It localises to the golgi apparatus. The protein resides in the golgi stack membrane. The protein localises to the vacuole membrane. It is found in the preautophagosomal structure membrane. In terms of biological role, required for cytoplasm to vacuole transport (Cvt) vesicles formation and autophagy. Has a role in sporulation. The protein is Autophagy-related protein 21 (mug179) of Schizosaccharomyces pombe (strain 972 / ATCC 24843) (Fission yeast).